We begin with the raw amino-acid sequence, 93 residues long: FMRFamide-like neuropeptides 22 (93 aa).

The signal sequence occupies residues 1–19 (MNRSMIALCVVLMVSLVSA). Positions 20-46 (QVFDLDGQQLAGLEQNDARLMEQQVKR) are excised as a propeptide. 3 positions are modified to phenylalanine amide: Phe-55, Phe-67, and Phe-79. The propeptide occupies 83-93 (SGAEAVSEQDY).

This sequence belongs to the FARP (FMRFamide related peptide) family.

It is found in the secreted. In terms of biological role, FMRFamides and FMRFamide-like peptides are neuropeptides. Its function is as follows. SPSAKWMRF-amide: Acts as a ligand for the npr-22 receptor in vitro. The polypeptide is FMRFamide-like neuropeptides 22 (Caenorhabditis elegans).